The sequence spans 825 residues: Putative NAD(+)--arginine ADP-ribosyltransferase Mav (825 aa).

The tract at residues 435-673 (ALKGLKKPPG…SGSDHHLPLH (239 aa)) is disordered. Composition is skewed to pro residues over residues 443–457 (PGVP…PAAP) and 468–491 (SGKP…PLPH). The segment covering 560–579 (PAADTPAPSAPAASMSAASG) has biased composition (low complexity). Residues 580–589 (PPMPPTPSLP) show a composition bias toward pro residues. Over residues 590–599 (EPASLPSGPS) the composition is skewed to low complexity. The 176-residue stretch at 650-825 (KNANGHGPHD…GRTIIEMIER (176 aa)) folds into the TR mART core domain. Over residues 656 to 670 (GPHDASLDSGSDHHL) the composition is skewed to basic and acidic residues. NAD(+)-binding positions include 687–699 (TGPG…FALR), 730–733 (RGTN), and Glu750. The active site involves Arg730. Residues Ser755 and Glu795 contribute to the active site. Glu795 is an NAD(+) binding site.

This sequence belongs to the Arg-specific ADP-ribosyltransferase family.

The protein localises to the secreted. It catalyses the reaction L-arginyl-[protein] + NAD(+) = N(omega)-(ADP-D-ribosyl)-L-arginyl-[protein] + nicotinamide + H(+). Its function is as follows. A probable mono(ADP-ribosyl)transferase, it may ADP-ribosylate Arg in target protein(s). The polypeptide is Putative NAD(+)--arginine ADP-ribosyltransferase Mav (Mycobacterium avium (strain 104)).